We begin with the raw amino-acid sequence, 1024 residues long: Gamma-tubulin complex component 5 (1024 aa).

Disordered regions lie at residues 153 to 203, 523 to 545, and 853 to 873; these read IGLG…GGPQ, NEDK…SSRQ, and SQAK…GPPK. Residues 189–198 show a composition bias toward basic and acidic residues; that stretch reads TPLEEQDHNR. Low complexity predominate over residues 529–543; the sequence is DSASASSGSDQGPSS. Residues 853 to 864 are compositionally biased toward basic and acidic residues; that stretch reads SQAKEDIPRDQD.

The protein belongs to the TUBGCP family. As to quaternary structure, component of the gamma-tubulin ring complex (gTuRC) consisting of TUBGCP2, TUBGCP3, TUBGCP4, TUBGCP5 and TUBGCP6 and gamma-tubulin TUBG1 or TUBG2. TUBGCP2, TUBGCP3, TUBGCP4, TUBGCP5 and TUBGCP6 assemble in a 5:5:2:1:1 stoichiometry; each is associated with a gamma-tubulin, thereby arranging 14 gamma-tubulins in a helical manner. Gamma-tubulin at the first position is blocked by TUBGCP3 at the last position, allowing 13 protafilaments to grow into a microtubule. The gTuRC (via TUBGCP3 and TUBGCP6) interacts with ACTB and MZT1; the interactions form a luminal bridge that stabilizes the initial structure during complex assembly. The gTuRC (via TUBGCP2) interacts with MZT2A/MZT2B and CDK5RAP2 (via CM1 motif); the interactions play a role in gTuRC activation.

It localises to the cytoplasm. Its subcellular location is the cytoskeleton. It is found in the microtubule organizing center. The protein resides in the centrosome. Component of the gamma-tubulin ring complex (gTuRC) which mediates microtubule nucleation. The gTuRC regulates the minus-end nucleation of alpha-beta tubulin heterodimers that grow into microtubule protafilaments, a critical step in centrosome duplication and spindle formation. The polypeptide is Gamma-tubulin complex component 5 (Tubgcp5) (Mus musculus (Mouse)).